The chain runs to 313 residues: tRNA uridine(34) hydroxylase (313 aa).

The Rhodanese domain maps to 127–225 (SDPDTILIDT…YLETVPEEES (99 aa)). Residue Cys185 is the Cysteine persulfide intermediate of the active site.

It belongs to the TrhO family.

It carries out the reaction uridine(34) in tRNA + AH2 + O2 = 5-hydroxyuridine(34) in tRNA + A + H2O. Catalyzes oxygen-dependent 5-hydroxyuridine (ho5U) modification at position 34 in tRNAs. This is tRNA uridine(34) hydroxylase from Gluconobacter oxydans (strain 621H) (Gluconobacter suboxydans).